Here is a 548-residue protein sequence, read N- to C-terminus: 2-succinyl-5-enolpyruvyl-6-hydroxy-3-cyclohexene-1-carboxylate synthase (548 aa).

Belongs to the TPP enzyme family. MenD subfamily. Homodimer. Requires Mg(2+) as cofactor. Mn(2+) is required as a cofactor. The cofactor is thiamine diphosphate.

The enzyme catalyses isochorismate + 2-oxoglutarate + H(+) = 5-enolpyruvoyl-6-hydroxy-2-succinyl-cyclohex-3-ene-1-carboxylate + CO2. The protein operates within quinol/quinone metabolism; 1,4-dihydroxy-2-naphthoate biosynthesis; 1,4-dihydroxy-2-naphthoate from chorismate: step 2/7. Its pathway is quinol/quinone metabolism; menaquinone biosynthesis. Catalyzes the thiamine diphosphate-dependent decarboxylation of 2-oxoglutarate and the subsequent addition of the resulting succinic semialdehyde-thiamine pyrophosphate anion to isochorismate to yield 2-succinyl-5-enolpyruvyl-6-hydroxy-3-cyclohexene-1-carboxylate (SEPHCHC). This chain is 2-succinyl-5-enolpyruvyl-6-hydroxy-3-cyclohexene-1-carboxylate synthase, found in Mycobacterium marinum (strain ATCC BAA-535 / M).